The primary structure comprises 226 residues: Probable chemoreceptor glutamine deamidase CheD (226 aa).

The disordered stretch occupies residues 207-226 (PGGMRVERFDTPSRRDPVGA).

This sequence belongs to the CheD family.

The catalysed reaction is L-glutaminyl-[protein] + H2O = L-glutamyl-[protein] + NH4(+). Functionally, probably deamidates glutamine residues to glutamate on methyl-accepting chemotaxis receptors (MCPs), playing an important role in chemotaxis. In Bordetella bronchiseptica (strain ATCC BAA-588 / NCTC 13252 / RB50) (Alcaligenes bronchisepticus), this protein is Probable chemoreceptor glutamine deamidase CheD.